The following is a 444-amino-acid chain: N-succinylarginine dihydrolase (444 aa).

Residues 19 to 28, N110, and 137 to 138 each bind substrate; these read AGLSFGNVAS and HR. E174 is an active-site residue. Position 214 (R214) interacts with substrate. The active site involves H250. Residues D252 and N362 each contribute to the substrate site. C368 serves as the catalytic Nucleophile.

It belongs to the succinylarginine dihydrolase family. In terms of assembly, homodimer.

It catalyses the reaction N(2)-succinyl-L-arginine + 2 H2O + 2 H(+) = N(2)-succinyl-L-ornithine + 2 NH4(+) + CO2. The protein operates within amino-acid degradation; L-arginine degradation via AST pathway; L-glutamate and succinate from L-arginine: step 2/5. Catalyzes the hydrolysis of N(2)-succinylarginine into N(2)-succinylornithine, ammonia and CO(2). The chain is N-succinylarginine dihydrolase from Shewanella frigidimarina (strain NCIMB 400).